The primary structure comprises 498 residues: Putrescine N-hydroxylase (498 aa).

FAD contacts are provided by Phe23, Asp43, Lys45, Trp50, His51, and Gln62. NADP(+)-binding residues include Gln62 and Arg104. Val127 lines the FAD pocket. Residues Ser207, Arg231, Tyr275, and Leu309 each contribute to the NADP(+) site. 3 residues coordinate FAD: Asn386, Pro397, and Leu399. The segment covering 443–474 (LESNTHSAVTPSKTRQGLNPSAKSVQQPSIEP) has biased composition (polar residues). The tract at residues 443–498 (LESNTHSAVTPSKTRQGLNPSAKSVQQPSIEPQTALRIAPTGGNVSALMAPNKEAQ) is disordered.

The protein belongs to the lysine N(6)-hydroxylase/L-ornithine N(5)-oxygenase family. FAD serves as cofactor.

It catalyses the reaction putrescine + NADPH + O2 = N-hydroxyputrescine + NADP(+) + H2O. It functions in the pathway siderophore biosynthesis. N-hydroxylating monooxygenase involved in the biosynthesis of the siderophore putrebactin. Catalyzes the N-hydroxylation of the aliphatic diamine putrescine into N-hydroxyputrescine (NHP). The sequence is that of Putrescine N-hydroxylase from Shewanella oneidensis (strain ATCC 700550 / JCM 31522 / CIP 106686 / LMG 19005 / NCIMB 14063 / MR-1).